We begin with the raw amino-acid sequence, 26 residues long: Delta-hemolysin (26 aa).

Residue M1 is modified to N-formylmethionine.

The protein belongs to the delta-lysin family.

Its subcellular location is the secreted. The protein resides in the host cell membrane. Its function is as follows. Lyses erythrocytes and many other mammalian cells. The sequence is that of Delta-hemolysin (hld) from Staphylococcus aureus (strain Mu50 / ATCC 700699).